The following is a 405-amino-acid chain: Putative polysaccharide ligase RP358 (405 aa).

10 consecutive transmembrane segments (helical) span residues 23–43, 77–97, 120–140, 156–178, 201–221, 227–247, 270–290, 322–342, 353–375, and 377–397; these read IAATVAFFLLSIIITGFISFI, LFTAWCFISCLFAVHPINSLV, VLYIKNSLILGIITAILLFFI, FGLYMLDRGCALLSITTWVAIII, ISDSLASFLGFSIGGIIFILA, IFFKLITISLITGSLLFPVIA, LFIWHFVANKIIIRPILGYGF, ILQITLELGILGLALFLCLVY, VSNFRAASYSCFINYYIIGMISY, and IWQTWWILSGIWILVLMKLLV.

It belongs to the O-antigen ligase family.

The protein localises to the membrane. This is Putative polysaccharide ligase RP358 from Rickettsia prowazekii (strain Madrid E).